We begin with the raw amino-acid sequence, 280 residues long: Polyamine aminopropyltransferase 1 (280 aa).

The 235-residue stretch at 3 to 237 folds into the PABS domain; sequence DIVFIERDPY…YWWTFSIASK (235 aa). Glutamine 33 contributes to the S-methyl-5'-thioadenosine binding site. Positions 64 and 88 each coordinate spermidine. S-methyl-5'-thioadenosine is bound by residues aspartate 108 and 139–140; that span reads DG. Aspartate 157 (proton acceptor) is an active-site residue. 157–160 serves as a coordination point for spermidine; the sequence is DSTD.

Belongs to the spermidine/spermine synthase family. As to quaternary structure, homodimer or homotetramer.

It is found in the cytoplasm. The catalysed reaction is S-adenosyl 3-(methylsulfanyl)propylamine + putrescine = S-methyl-5'-thioadenosine + spermidine + H(+). The protein operates within amine and polyamine biosynthesis; spermidine biosynthesis; spermidine from putrescine: step 1/1. Catalyzes the irreversible transfer of a propylamine group from the amino donor S-adenosylmethioninamine (decarboxy-AdoMet) to putrescine (1,4-diaminobutane) to yield spermidine. The sequence is that of Polyamine aminopropyltransferase 1 from Aquifex aeolicus (strain VF5).